Reading from the N-terminus, the 242-residue chain is Small ribosomal subunit protein uS3 (242 aa).

The region spanning 39-110 (IRKFIHKKYG…QVRINVVEVE (72 aa)) is the KH type-2 domain. Residues 216-242 (QTMPVGANPRRRASRRPQQFEDRSNEG) are disordered. A compositionally biased stretch (basic and acidic residues) spans 233 to 242 (QQFEDRSNEG).

It belongs to the universal ribosomal protein uS3 family. In terms of assembly, part of the 30S ribosomal subunit. Forms a tight complex with proteins S10 and S14.

In terms of biological role, binds the lower part of the 30S subunit head. Binds mRNA in the 70S ribosome, positioning it for translation. In Synechococcus sp. (strain CC9902), this protein is Small ribosomal subunit protein uS3.